The following is a 101-amino-acid chain: Cell division suppressor protein YneA (101 aa).

One can recognise a LysM domain in the interval 35–86; sequence MTVTVASGDTLWGLAKQYEPAHGLSPDEFIRWVVDVNRLPSSRLTAGEQIVI.

It belongs to the YneA family.

The protein localises to the cytoplasm. Its function is as follows. Inhibits cell division during the SOS response. Affects a later stage of the cell division protein assembly, after the assembly of the Z ring, by probably suppressing recruitment of FtsL and/or DivIC to the division machinery. The polypeptide is Cell division suppressor protein YneA (Geobacillus thermodenitrificans (strain NG80-2)).